A 164-amino-acid chain; its full sequence is C-phycoerythrin class 1 subunit alpha (164 aa).

C82 and C139 together coordinate (2R,3E)-phycoerythrobilin.

The protein belongs to the phycobiliprotein family. Heterodimer of an alpha and a beta chain. In terms of processing, contains one covalently linked bilin chromophore.

The protein resides in the cellular thylakoid membrane. Its function is as follows. Light-harvesting photosynthetic bile pigment-protein from the phycobiliprotein complex. In Synechococcus sp. (strain WH7803), this protein is C-phycoerythrin class 1 subunit alpha (cpeA).